Consider the following 273-residue polypeptide: Large ribosomal subunit protein uL2cz/uL2cy (273 aa).

Disordered stretches follow at residues 1–25 and 224–273; these read MAIH…VKSN and NPVD…RRRK.

This sequence belongs to the universal ribosomal protein uL2 family. In terms of assembly, part of the 50S ribosomal subunit.

It is found in the plastid. The protein localises to the chloroplast. The protein is Large ribosomal subunit protein uL2cz/uL2cy (rpl2-A) of Phalaenopsis aphrodite subsp. formosana (Moth orchid).